Consider the following 365-residue polypeptide: MILLNLMLYFCSMQTTSTEIKKKCIRSLSAEELKDFFVASGEKAFRSRQVYEWLWKRSARSFEQMTNLSKETRTLLENNFSINPVTISQKQVSTDGTIKFGFKLHDGYLVEGVLIPADDRMTACISSQVGCSLTCKFCATGYMDRKRNLEPYEIYDQVVLIKEAAEEHYQTPLTNIVLMGMGEPLLNYTNVLKGIDKVTSEEGLHIASKRITLSTAGIAKMITKLGDEKVKFRLALSLHAANDVKRNTIMPINETNNLNVLKESLLHFCKETGSSVTFEYIVFDGVNDTAQDAKELYAFAKNIPCKINIIEYNPIQEADFMNTSVDKLEQFKKVLTDKGIIVNIRRSRGKDIDAACGQLAIKEVK.

E111 (proton acceptor) is an active-site residue. A Radical SAM core domain is found at 117-351 (ADDRMTACIS…VNIRRSRGKD (235 aa)). C124 and C356 are disulfide-bonded. 3 residues coordinate [4Fe-4S] cluster: C131, C135, and C138. S-adenosyl-L-methionine is bound by residues 182-183 (GE), S214, 237-239 (SLH), and N313. Residue C356 is the S-methylcysteine intermediate of the active site.

This sequence belongs to the radical SAM superfamily. RlmN family. Requires [4Fe-4S] cluster as cofactor.

Its subcellular location is the cytoplasm. The enzyme catalyses adenosine(2503) in 23S rRNA + 2 reduced [2Fe-2S]-[ferredoxin] + 2 S-adenosyl-L-methionine = 2-methyladenosine(2503) in 23S rRNA + 5'-deoxyadenosine + L-methionine + 2 oxidized [2Fe-2S]-[ferredoxin] + S-adenosyl-L-homocysteine. The catalysed reaction is adenosine(37) in tRNA + 2 reduced [2Fe-2S]-[ferredoxin] + 2 S-adenosyl-L-methionine = 2-methyladenosine(37) in tRNA + 5'-deoxyadenosine + L-methionine + 2 oxidized [2Fe-2S]-[ferredoxin] + S-adenosyl-L-homocysteine. Specifically methylates position 2 of adenine 2503 in 23S rRNA and position 2 of adenine 37 in tRNAs. In Cytophaga hutchinsonii (strain ATCC 33406 / DSM 1761 / CIP 103989 / NBRC 15051 / NCIMB 9469 / D465), this protein is Probable dual-specificity RNA methyltransferase RlmN.